A 608-amino-acid polypeptide reads, in one-letter code: Lysophospholipase 2 (608 aa).

Positions 1–17 are cleaved as a signal peptide; it reads MLVWQSILLFLVGCVLS. The 535-residue stretch at 30-564 folds into the PLA2c domain; it reads QCPEGKLTRS…ENYCWDGTIY (535 aa). Residues asparagine 259, asparagine 365, asparagine 450, asparagine 464, asparagine 491, and asparagine 572 are each glycosylated (N-linked (GlcNAc...) asparagine).

Belongs to the lysophospholipase family.

It is found in the secreted. It catalyses the reaction a 1-acyl-sn-glycero-3-phosphocholine + H2O = sn-glycerol 3-phosphocholine + a fatty acid + H(+). Catalyzes the release of fatty acids from lysophospholipids. Phospholipase B may well contribute to pathogenicity by abetting the fungus in damaging and traversing host cell membranes, processes which likely increase the rapidity of disseminated infection. The sequence is that of Lysophospholipase 2 (PLB2) from Candida albicans (Yeast).